The primary structure comprises 541 residues: Chaperonin GroEL (541 aa).

ATP contacts are provided by residues 29–32, 86–90, glycine 413, 476–478, and aspartate 492; these read TLGP, DGTTT, and NAA.

It belongs to the chaperonin (HSP60) family. As to quaternary structure, forms a cylinder of 14 subunits composed of two heptameric rings stacked back-to-back. Interacts with the co-chaperonin GroES.

Its subcellular location is the cytoplasm. It catalyses the reaction ATP + H2O + a folded polypeptide = ADP + phosphate + an unfolded polypeptide.. In terms of biological role, together with its co-chaperonin GroES, plays an essential role in assisting protein folding. The GroEL-GroES system forms a nano-cage that allows encapsulation of the non-native substrate proteins and provides a physical environment optimized to promote and accelerate protein folding. The protein is Chaperonin GroEL of Rhodococcus hoagii (Corynebacterium equii).